The primary structure comprises 106 residues: Large ribosomal subunit protein eL42 (106 aa).

A disordered region spans residues Ser37–Pro56.

The protein belongs to the eukaryotic ribosomal protein eL42 family.

The protein is Large ribosomal subunit protein eL42 (RPL44) of Pichia kudriavzevii (Yeast).